The sequence spans 445 residues: Tubulin beta-4B chain (445 aa).

Residues 1 to 4 carry the MREI motif motif; the sequence is MREI. Q11 contributes to the GTP binding site. Position 55 is a phosphothreonine (T55). N6-acetyllysine is present on K58. The GTP site is built by E69, S138, G142, T143, and G144. E69 lines the Mg(2+) pocket. Position 172 is a phosphoserine; by CDK1 (S172). Positions 204 and 226 each coordinate GTP. The interval 426 to 445 is disordered; sequence QDATAEEEGEFEEEAEEEVA. The span at 429-445 shows a compositional bias: acidic residues; sequence TAEEEGEFEEEAEEEVA. The residue at position 438 (E438) is a 5-glutamyl polyglutamate.

It belongs to the tubulin family. Dimer of alpha and beta chains. A typical microtubule is a hollow water-filled tube with an outer diameter of 25 nm and an inner diameter of 15 nM. Alpha-beta heterodimers associate head-to-tail to form protofilaments running lengthwise along the microtubule wall with the beta-tubulin subunit facing the microtubule plus end conferring a structural polarity. Microtubules usually have 13 protofilaments but different protofilament numbers can be found in some organisms and specialized cells. Component of sperm flagellar doublet microtubules. Mg(2+) serves as cofactor. In terms of processing, some glutamate residues at the C-terminus are polyglycylated, resulting in polyglycine chains on the gamma-carboxyl group. Glycylation is mainly limited to tubulin incorporated into axonemes (cilia and flagella) whereas glutamylation is prevalent in neuronal cells, centrioles, axonemes, and the mitotic spindle. Both modifications can coexist on the same protein on adjacent residues, and lowering polyglycylation levels increases polyglutamylation, and reciprocally. Cilia and flagella glycylation is required for their stability and maintenance. Flagella glycylation controls sperm motility. Some glutamate residues at the C-terminus are polyglutamylated, resulting in polyglutamate chains on the gamma-carboxyl group. Polyglutamylation plays a key role in microtubule severing by spastin (SPAST). SPAST preferentially recognizes and acts on microtubules decorated with short polyglutamate tails: severing activity by SPAST increases as the number of glutamates per tubulin rises from one to eight, but decreases beyond this glutamylation threshold. Glutamylation is also involved in cilia motility. Post-translationally, phosphorylated on Ser-172 by CDK1 during the cell cycle, from metaphase to telophase, but not in interphase. This phosphorylation inhibits tubulin incorporation into microtubules.

The protein localises to the cytoplasm. It localises to the cytoskeleton. The protein resides in the flagellum axoneme. In terms of biological role, tubulin is the major constituent of microtubules, a cylinder consisting of laterally associated linear protofilaments composed of alpha- and beta-tubulin heterodimers. Microtubules grow by the addition of GTP-tubulin dimers to the microtubule end, where a stabilizing cap forms. Below the cap, tubulin dimers are in GDP-bound state, owing to GTPase activity of alpha-tubulin. In Rattus norvegicus (Rat), this protein is Tubulin beta-4B chain (Tubb4b).